The following is a 2278-amino-acid chain: Protein Ycf2 (2278 aa).

Residue 1632–1639 coordinates ATP; that stretch reads GSIGTGRS.

The protein belongs to the Ycf2 family.

It is found in the plastid. It localises to the chloroplast stroma. In terms of biological role, probable ATPase of unknown function. Its presence in a non-photosynthetic plant (Epifagus virginiana) and experiments in tobacco indicate that it has an essential function which is probably not related to photosynthesis. The sequence is that of Protein Ycf2 from Solanum bulbocastanum (Wild potato).